Reading from the N-terminus, the 523-residue chain is GMP synthase [glutamine-hydrolyzing] (523 aa).

One can recognise a Glutamine amidotransferase type-1 domain in the interval 8–205 (KILILDFGSQ…VVDICGCETN (198 aa)). Residue Cys-85 is the Nucleophile of the active site. Residues His-179 and Glu-181 contribute to the active site. The 193-residue stretch at 206–398 (WTAENIIEDA…LGLPAEMLNR (193 aa)) folds into the GMPS ATP-PPase domain. 233–239 (SGGVDSS) provides a ligand contact to ATP.

Homodimer.

It catalyses the reaction XMP + L-glutamine + ATP + H2O = GMP + L-glutamate + AMP + diphosphate + 2 H(+). The protein operates within purine metabolism; GMP biosynthesis; GMP from XMP (L-Gln route): step 1/1. In terms of biological role, catalyzes the synthesis of GMP from XMP. In Histophilus somni (strain 129Pt) (Haemophilus somnus), this protein is GMP synthase [glutamine-hydrolyzing].